We begin with the raw amino-acid sequence, 380 residues long: Queuine tRNA-ribosyltransferase (380 aa).

Asp96 acts as the Proton acceptor in catalysis. Substrate is bound by residues 96-100 (DSGGF), Asp150, Gln193, and Gly220. The tract at residues 251-257 (GVGAPDS) is RNA binding. The active-site Nucleophile is the Asp270. An RNA binding; important for wobble base 34 recognition region spans residues 275-279 (TRIAR). The Zn(2+) site is built by Cys308, Cys310, Cys313, and His339.

Belongs to the queuine tRNA-ribosyltransferase family. In terms of assembly, homodimer. Within each dimer, one monomer is responsible for RNA recognition and catalysis, while the other monomer binds to the replacement base PreQ1. Zn(2+) serves as cofactor.

It catalyses the reaction 7-aminomethyl-7-carbaguanine + guanosine(34) in tRNA = 7-aminomethyl-7-carbaguanosine(34) in tRNA + guanine. The protein operates within tRNA modification; tRNA-queuosine biosynthesis. Its function is as follows. Catalyzes the base-exchange of a guanine (G) residue with the queuine precursor 7-aminomethyl-7-deazaguanine (PreQ1) at position 34 (anticodon wobble position) in tRNAs with GU(N) anticodons (tRNA-Asp, -Asn, -His and -Tyr). Catalysis occurs through a double-displacement mechanism. The nucleophile active site attacks the C1' of nucleotide 34 to detach the guanine base from the RNA, forming a covalent enzyme-RNA intermediate. The proton acceptor active site deprotonates the incoming PreQ1, allowing a nucleophilic attack on the C1' of the ribose to form the product. After dissociation, two additional enzymatic reactions on the tRNA convert PreQ1 to queuine (Q), resulting in the hypermodified nucleoside queuosine (7-(((4,5-cis-dihydroxy-2-cyclopenten-1-yl)amino)methyl)-7-deazaguanosine). The polypeptide is Queuine tRNA-ribosyltransferase (Streptococcus thermophilus (strain CNRZ 1066)).